The primary structure comprises 1189 residues: Pyruvate carboxylase (1189 aa).

One can recognise a Biotin carboxylation domain in the interval 21–473 (TMNKILVANR…WTTFIDDTPE (453 aa)). ATP contacts are provided by lysine 139, glutamate 223, and histidine 258. Residues 143 to 340 (RNLAYAANVP…IVAAQIQIAA (198 aa)) form the ATP-grasp domain. The active site involves arginine 315. Residues 559-826 (LMIMDTTWRD…ETGIPEANAR (268 aa)) enclose the Pyruvate carboxyltransferase domain. Substrate is bound by residues 567–571 (RDAHQ) and arginine 640. Aspartate 568 lines the a divalent metal cation pocket. A divalent metal cation contacts are provided by lysine 736, histidine 766, and histidine 768. Lysine 736 bears the N6-carboxylysine mark. Threonine 900 is a binding site for substrate. The 76-residue stretch at 1099 to 1174 (KADAHNPNEI…DASDLIPKSS (76 aa)) folds into the Biotinyl-binding domain. Lysine 1140 bears the N6-biotinyllysine mark.

Biotin serves as cofactor. Zn(2+) is required as a cofactor.

The protein resides in the cytoplasm. The catalysed reaction is hydrogencarbonate + pyruvate + ATP = oxaloacetate + ADP + phosphate + H(+). It participates in carbohydrate biosynthesis; gluconeogenesis. In terms of biological role, pyruvate carboxylase catalyzes a 2-step reaction, involving the ATP-dependent carboxylation of the covalently attached biotin in the first step and the transfer of the carboxyl group to pyruvate in the second. The sequence is that of Pyruvate carboxylase (PYC1) from Komagataella pastoris (Yeast).